The chain runs to 124 residues: Glutaredoxin-2 (124 aa).

An intrachain disulfide couples Cys13 to Cys16.

Belongs to the glutaredoxin family. As to quaternary structure, homodimer.

The protein localises to the host cytoplasm. Glutaredoxin necessary for virion morphogenesis and virus replication. Functions as a thiol-disulfide transfer protein between membrane-associated OPG128 and substrates OPG095 or OPG053. The complete pathway for formation of disulfide bonds in intracellular virion membrane proteins sequentially involves oxidation of OPG072, OPG128 and OPG088. Exhibit thioltransferase and dehydroascorbate reductase activities in vitro. This is Glutaredoxin-2 (OPG088) from Camelus.